The sequence spans 37 residues: Large ribosomal subunit protein bL36 (37 aa).

This sequence belongs to the bacterial ribosomal protein bL36 family.

The sequence is that of Large ribosomal subunit protein bL36 from Chromohalobacter salexigens (strain ATCC BAA-138 / DSM 3043 / CIP 106854 / NCIMB 13768 / 1H11).